The following is a 458-amino-acid chain: UDP-N-acetylmuramate--L-alanine ligase (458 aa).

Residue 118-124 (GTHGKTT) participates in ATP binding.

It belongs to the MurCDEF family.

It is found in the cytoplasm. The enzyme catalyses UDP-N-acetyl-alpha-D-muramate + L-alanine + ATP = UDP-N-acetyl-alpha-D-muramoyl-L-alanine + ADP + phosphate + H(+). It functions in the pathway cell wall biogenesis; peptidoglycan biosynthesis. Its function is as follows. Cell wall formation. The protein is UDP-N-acetylmuramate--L-alanine ligase of Clostridium botulinum (strain Langeland / NCTC 10281 / Type F).